Consider the following 140-residue polypeptide: Nucleoside diphosphate kinase (140 aa).

ATP-binding residues include lysine 11, phenylalanine 59, arginine 87, threonine 93, arginine 104, and asparagine 114. Residue histidine 117 is the Pros-phosphohistidine intermediate of the active site.

The protein belongs to the NDK family. Homotetramer. The cofactor is Mg(2+).

It localises to the cytoplasm. It catalyses the reaction a 2'-deoxyribonucleoside 5'-diphosphate + ATP = a 2'-deoxyribonucleoside 5'-triphosphate + ADP. It carries out the reaction a ribonucleoside 5'-diphosphate + ATP = a ribonucleoside 5'-triphosphate + ADP. Major role in the synthesis of nucleoside triphosphates other than ATP. The ATP gamma phosphate is transferred to the NDP beta phosphate via a ping-pong mechanism, using a phosphorylated active-site intermediate. This Bradyrhizobium sp. (strain BTAi1 / ATCC BAA-1182) protein is Nucleoside diphosphate kinase.